The following is a 29-amino-acid chain: ShK homolog Ask132958 (29 aa).

Residues Cys1–Cys29 enclose the ShKT domain. 3 disulfide bridges follow: Cys1–Cys29, Cys8–Cys22, and Cys13–Cys26.

Belongs to the sea anemone type 1 potassium channel toxin family. Type 1a subfamily.

The protein resides in the secreted. The protein localises to the nematocyst. In terms of biological role, this peptide is similar to the potassium channel toxin ShK, but does not show activity on potassium channels. It appears that Lys-19, which is expected to occupy the pore of the channel, is not sufficiently accessible for binding, and therefore that this peptide must have a distinct functional role that does not involve potassium channels. It is noteworthy that this peptide is much more stable in the presence of trypsin, chymotrypsin and pepsin than the toxin ShK. This Anemonia sulcata (Mediterranean snakelocks sea anemone) protein is ShK homolog Ask132958.